An 821-amino-acid chain; its full sequence is Glycerol-3-phosphate acyltransferase (821 aa).

The short motif at 310 to 315 (CHRSHM) is the HXXXXD motif element.

It belongs to the GPAT/DAPAT family.

It localises to the cell membrane. It carries out the reaction sn-glycerol 3-phosphate + an acyl-CoA = a 1-acyl-sn-glycero-3-phosphate + CoA. Its pathway is phospholipid metabolism; CDP-diacylglycerol biosynthesis; CDP-diacylglycerol from sn-glycerol 3-phosphate: step 1/3. This is Glycerol-3-phosphate acyltransferase from Baumannia cicadellinicola subsp. Homalodisca coagulata.